Reading from the N-terminus, the 2033-residue chain is Envoplakin (2033 aa).

Residues 1–27 (MFKGLSKGSQGKGSPKGSPAKGSPKGS) are compositionally biased toward low complexity. Disordered stretches follow at residues 1–37 (MFKG…AATQ) and 65–85 (QQDR…ETGR). Residues 1 to 841 (MFKGLSKGSQ…LEPTLAVSAP (841 aa)) form a globular 1 region. The interval 12–28 (KGSPKGSPAKGSPKGSP) is 4 X 4 AA tandem repeats of K-G-S-P. Positions 71–84 (SEQSQALQHQQETG) are enriched in polar residues. Residues 229 to 330 (YTHLQGCTRQ…LCICQETQLQ (102 aa)) form a Spectrin repeat. Over residues 388–401 (TERATGDLQRRSRD) the composition is skewed to basic and acidic residues. Disordered regions lie at residues 388-418 (TERA…PLHV) and 891-916 (SEDI…ESEA). The 58-residue stretch at 413–470 (QQPLHVDSICDWDSGEVQLLQGERYKLVDNTDPHAWVVQGPGGETKRAPAACFCIPAP) folds into the SH3 domain. Positions 842 to 1673 (KRPRVAPLQE…AKVSREELSQ (832 aa)) are central fibrous rod domain. The stretch at 845–1135 (RVAPLQESIQ…AISSVEPKVI (291 aa)) forms a coiled coil. Residues 891–902 (SEDIRRTHDAKQ) are compositionally biased toward basic and acidic residues. A Plectin 1 repeat occupies 1185–1226 (KQRPKVQLQERVHEIFQVDPETEQEITRLKAKLQEMAGKRSG). Position 1575 is a phosphoserine (Ser-1575). Residues 1614 to 1623 (QEESKLLSQK) are compositionally biased toward low complexity. A disordered region spans residues 1614 to 1636 (QEESKLLSQKTESERQKAAQRGQ). The segment at 1674 to 2033 (ETQTRETNLS…ASPTVPRSLR (360 aa)) is globular 2. A Plectin 2 repeat occupies 1678 to 1713 (RETNLSTKISILEPETGKDMSPYEAYKRGIIDRGQY). Ser-1799 is modified (phosphoserine). Plectin repeat units lie at residues 1818–1855 (LGLG…PITG), 1856–1893 (QKLL…NTST), 1894–1931 (QRLL…RESV), 1932–1969 (LPHL…EELA), and 1970–2007 (QLLQ…PLSG). At Ser-2025 the chain carries Phosphoserine.

This sequence belongs to the plakin or cytolinker family. As to quaternary structure, may form a homodimer or a heterodimer with PPL. Exclusively expressed in stratified squamous epithelia.

It is found in the cell junction. The protein resides in the desmosome. Its subcellular location is the cornified envelope. The protein localises to the cytoplasm. It localises to the cytoskeleton. Its function is as follows. Component of the cornified envelope of keratinocytes. May link the cornified envelope to desmosomes and intermediate filaments. The sequence is that of Envoplakin (EVPL) from Homo sapiens (Human).